Here is a 248-residue protein sequence, read N- to C-terminus: Phycocyanobilin:ferredoxin oxidoreductase (248 aa).

The protein belongs to the HY2 family.

It catalyses the reaction (2R,3Z)-phycocyanobilin + 4 oxidized [2Fe-2S]-[ferredoxin] = biliverdin IXalpha + 4 reduced [2Fe-2S]-[ferredoxin] + 4 H(+). Functionally, catalyzes the four-electron reduction of biliverdin IX-alpha (2-electron reduction at both the A and D rings); the reaction proceeds via an isolatable 2-electron intermediate, 181,182-dihydrobiliverdin. This is Phycocyanobilin:ferredoxin oxidoreductase (pcyA) from Synechocystis sp. (strain ATCC 27184 / PCC 6803 / Kazusa).